A 554-amino-acid chain; its full sequence is Glucose-6-phosphate isomerase 2 (554 aa).

Residue E359 is the Proton donor of the active site. Catalysis depends on residues H390 and K518.

This sequence belongs to the GPI family.

It localises to the cytoplasm. It catalyses the reaction alpha-D-glucose 6-phosphate = beta-D-fructose 6-phosphate. It functions in the pathway carbohydrate biosynthesis; gluconeogenesis. Its pathway is carbohydrate degradation; glycolysis; D-glyceraldehyde 3-phosphate and glycerone phosphate from D-glucose: step 2/4. Functionally, catalyzes the reversible isomerization of glucose-6-phosphate to fructose-6-phosphate. The polypeptide is Glucose-6-phosphate isomerase 2 (Pseudomonas putida (strain ATCC 47054 / DSM 6125 / CFBP 8728 / NCIMB 11950 / KT2440)).